The following is a 459-amino-acid chain: Zinc finger and BTB domain-containing protein 9 (459 aa).

The region spanning 48-112 is the BTB domain; it reads CDVSLLVQGR…IYSGSLHLPL (65 aa). Residues 178-189 show a composition bias toward polar residues; it reads VRSSASTENSVL. Disordered stretches follow at residues 178-200 and 212-274; these read VRSS…EGSE and EEEE…ASQI. Glycyl lysine isopeptide (Lys-Gly) (interchain with G-Cter in SUMO2) cross-links involve residues lysine 285, lysine 293, and lysine 368. A disordered region spans residues 293 to 356; the sequence is KEKTKVLSGE…GGTGQAMHGP (64 aa). The C2H2-type 1 zinc-finger motif lies at 397–419; it reads FGCGICNKRFKLKHHLTEHMKTH. A C2H2-type 2; atypical zinc finger spans residues 424–446; it reads HACPHCGRRFRVQAFFLRHRDLC.

Its subcellular location is the nucleus. Its function is as follows. May be involved in transcriptional regulation. This Mus musculus (Mouse) protein is Zinc finger and BTB domain-containing protein 9 (Zbtb9).